The chain runs to 118 residues: Large ribosomal subunit protein uL18 (118 aa).

Belongs to the universal ribosomal protein uL18 family. Part of the 50S ribosomal subunit; part of the 5S rRNA/L5/L18/L25 subcomplex. Contacts the 5S and 23S rRNAs.

This is one of the proteins that bind and probably mediate the attachment of the 5S RNA into the large ribosomal subunit, where it forms part of the central protuberance. The protein is Large ribosomal subunit protein uL18 of Sulfurimonas denitrificans (strain ATCC 33889 / DSM 1251) (Thiomicrospira denitrificans (strain ATCC 33889 / DSM 1251)).